Here is a 148-residue protein sequence, read N- to C-terminus: Protein H2A.6 (148 aa).

A disordered region spans residues 120–148 (GAAEKESTKSPKKKAATKSPKKKTAATKE). 2 consecutive short sequence motifs (SPKK motif) follow at residues 129–132 (SPKK) and 138–141 (SPKK). A compositionally biased stretch (basic residues) spans 129–148 (SPKKKAATKSPKKKTAATKE).

The protein belongs to the histone H2A family. The nucleosome is a histone octamer containing two molecules each of H2A, H2B, H3 and H4 assembled in one H3-H4 heterotetramer and two H2A-H2B heterodimers. The octamer wraps approximately 147 bp of DNA. Abundant in meristematic tissues.

It localises to the nucleus. The protein resides in the chromosome. Core component of nucleosome. Nucleosomes wrap and compact DNA into chromatin, limiting DNA accessibility to the cellular machineries which require DNA as a template. Histones thereby play a central role in transcription regulation, DNA repair, DNA replication and chromosomal stability. DNA accessibility is regulated via a complex set of post-translational modifications of histones, also called histone code, and nucleosome remodeling. The sequence is that of Protein H2A.6 (H2A-3) from Triticum aestivum (Wheat).